Reading from the N-terminus, the 696-residue chain is uncharacterized protein (696 aa).

10 consecutive transmembrane segments (helical) span residues 38-58 (IISIISGIFIGLTAALLNALA), 107-127 (LIYVSVSVGFAFIATTLGYVV), 215-235 (AMASGIAASFNAPVGGVIFAL), 245-265 (SLFTGSIWYEFLCSASSVVAL), 292-312 (TLPFIFISILCGCLGSVLIYL), 329-349 (VFFVIFLSLITSLTAYAILGE), 380-400 (FWVTAIVLFTSALLGLLLTSA), 402-422 (FGAAIPTGIIVPSLAIGACIG), 433-453 (FPSLAGTSIYGVIGSIAFLSS), and 457-477 (LVVALVVILFELTGALNIALP). 2 CBS domains span residues 527–587 (RSPE…PMSS) and 617–674 (IHPT…THTG).

This sequence belongs to the chloride channel (TC 2.A.49) family.

It localises to the membrane. Voltage-gated chloride channel. This is an uncharacterized protein from Schizosaccharomyces pombe (strain 972 / ATCC 24843) (Fission yeast).